The following is a 212-amino-acid chain: Cyclin-dependent kinase inhibitor 3 (212 aa).

A compositionally biased stretch (polar residues) spans 1–12; it reads MKPPSSIQTSEF. A disordered region spans residues 1–23; sequence MKPPSSIQTSEFDSSDEEPIEDE. Residues 1 to 34 are interaction with CDK2; that stretch reads MKPPSSIQTSEFDSSDEEPIEDEQTPIQISWLPL. Residues 13 to 23 are compositionally biased toward acidic residues; it reads DSSDEEPIEDE. Positions 32-201 constitute a Tyrosine-protein phosphatase domain; the sequence is LPLSRVNYSQ…FRDKLAAHLS (170 aa). The active-site Phosphocysteine intermediate is cysteine 140.

This sequence belongs to the protein-tyrosine phosphatase family. In terms of assembly, interacts with cyclin-dependent kinases such as CDK1, CDK2 and CDK3. Does not interact with CDK4. Interacts (via C-terminus) with phosphorylated CDK2 (via C-terminal helix). Interacts with MS4A3 (via C-terminus); the interaction enhances CDKN3 enzymatic activity.

The protein localises to the cytoplasm. The protein resides in the perinuclear region. It carries out the reaction O-phospho-L-tyrosyl-[protein] + H2O = L-tyrosyl-[protein] + phosphate. It catalyses the reaction O-phospho-L-seryl-[protein] + H2O = L-seryl-[protein] + phosphate. The enzyme catalyses O-phospho-L-threonyl-[protein] + H2O = L-threonyl-[protein] + phosphate. Its function is as follows. May play a role in cell cycle regulation. Dual specificity phosphatase active toward substrates containing either phosphotyrosine or phosphoserine residues. Dephosphorylates CDK2 at 'Thr-160' in a cyclin-dependent manner. In Sus scrofa (Pig), this protein is Cyclin-dependent kinase inhibitor 3.